The sequence spans 2512 residues: Isonitrile lipopeptide synthase (2512 aa).

Carrier domains follow at residues 935–1003 (AAGL…PTPD) and 1984–2059 (APAG…GRDA). An O-(pantetheine 4'-phosphoryl)serine mark is found at S963 and S2019. In terms of domain architecture, Thioester reductase (TE) spans 2112 to 2372 (LTGATGFLGR…LPVTFVAEAI (261 aa)).

Belongs to the ATP-dependent AMP-binding enzyme family. The cofactor is pantetheine 4'-phosphate.

The catalysed reaction is 2 a (3R)-3-isocyanyl-fatty acyl-[ACP] + L-lysine + ATP + 2 NADPH = an isonitrile lipopeptide + 2 holo-[ACP] + AMP + diphosphate + 2 NADP(+). In terms of biological role, nonribosomal peptide synthetase (NRPS) involved in the biosynthesis of a unique class of isonitrile lipopeptides (INLPs) that seem to function as virulence factors in M.tuberculosis and to play a role in metal acquisition. Catalyzes the final step in the pathway, i.e. the condensation of a (3R)-3-isocyanyl-fatty acyl-[ACP] to both amino groups of a lysine, producing isonitrile lipopeptides. This is Isonitrile lipopeptide synthase from Mycobacterium tuberculosis (strain ATCC 25618 / H37Rv).